The sequence spans 330 residues: Aspartate--ammonia ligase (330 aa).

The protein belongs to the class-II aminoacyl-tRNA synthetase family. AsnA subfamily.

Its subcellular location is the cytoplasm. The catalysed reaction is L-aspartate + NH4(+) + ATP = L-asparagine + AMP + diphosphate + H(+). It functions in the pathway amino-acid biosynthesis; L-asparagine biosynthesis; L-asparagine from L-aspartate (ammonia route): step 1/1. This chain is Aspartate--ammonia ligase, found in Escherichia coli O127:H6 (strain E2348/69 / EPEC).